The sequence spans 105 residues: Nucleoid-associated protein cu1912 (105 aa).

This sequence belongs to the YbaB/EbfC family. In terms of assembly, homodimer.

It localises to the cytoplasm. It is found in the nucleoid. Its function is as follows. Binds to DNA and alters its conformation. May be involved in regulation of gene expression, nucleoid organization and DNA protection. This chain is Nucleoid-associated protein cu1912, found in Corynebacterium urealyticum (strain ATCC 43042 / DSM 7109).